Here is a 289-residue protein sequence, read N- to C-terminus: Iron-sulfur cluster carrier protein (289 aa).

Over residues 1–18 the composition is skewed to low complexity; the sequence is MAEECSGNCDSCGSSSDC. Positions 1 to 20 are disordered; sequence MAEECSGNCDSCGSSSDCSD. Position 48 to 55 (48 to 55) interacts with ATP; that stretch reads GKGGVGKS.

It belongs to the Mrp/NBP35 ATP-binding proteins family. As to quaternary structure, homodimer.

Functionally, binds and transfers iron-sulfur (Fe-S) clusters to target apoproteins. Can hydrolyze ATP. In Methanococcus maripaludis (strain DSM 14266 / JCM 13030 / NBRC 101832 / S2 / LL), this protein is Iron-sulfur cluster carrier protein.